The primary structure comprises 131 residues: Large ribosomal subunit protein bL17 (131 aa).

Belongs to the bacterial ribosomal protein bL17 family. As to quaternary structure, part of the 50S ribosomal subunit. Contacts protein L32.

This is Large ribosomal subunit protein bL17 from Janthinobacterium sp. (strain Marseille) (Minibacterium massiliensis).